Consider the following 427-residue polypeptide: Transcription termination factor Rho (427 aa).

One can recognise a Rho RNA-BD domain in the interval 51 to 125 (LLFMEGVLEI…LHVEAVNGDD (75 aa)). ATP-binding positions include 168–173 (GFGQRG), 180–185 (KAGKTM), and Arg211.

It belongs to the Rho family. In terms of assembly, homohexamer. The homohexamer assembles into an open ring structure.

Its function is as follows. Facilitates transcription termination by a mechanism that involves Rho binding to the nascent RNA, activation of Rho's RNA-dependent ATPase activity, and release of the mRNA from the DNA template. In Bacillus subtilis (strain 168), this protein is Transcription termination factor Rho.